The chain runs to 886 residues: Peptidyl-lysine N-acetyltransferase Pat (886 aa).

The region spanning Gln-487–Lys-523 is the ATP-grasp domain. Ala-513 to Leu-524 serves as a coordination point for ATP. The 156-residue stretch at Cys-726 to Ala-881 folds into the N-acetyltransferase domain.

The protein in the N-terminal section; belongs to the acetate CoA ligase alpha subunit family. This sequence in the central section; belongs to the acetate CoA ligase beta subunit family. As to quaternary structure, monomer in the absence of acetyl-CoA. Oligomerizes to a tetrameric form in the presence of acetyl-CoA.

The enzyme catalyses L-lysyl-[protein] + acetyl-CoA = N(6)-acetyl-L-lysyl-[protein] + CoA + H(+). Its activity is regulated as follows. Exhibits positive cooperativity. It may be the result of acetyl-CoA binding to two distinct sites, or the result of subunit interactions. In terms of biological role, acetylates and inactivates the acetyl-CoA synthase (Acs). Can also acetylate other central metabolic enzymes in response to environmental changes. This is Peptidyl-lysine N-acetyltransferase Pat (pat) from Salmonella typhimurium (strain LT2 / SGSC1412 / ATCC 700720).